The sequence spans 182 residues: Dual-action ribosomal maturation protein DarP (182 aa).

Belongs to the DarP family.

It localises to the cytoplasm. Member of a network of 50S ribosomal subunit biogenesis factors which assembles along the 30S-50S interface, preventing incorrect 23S rRNA structures from forming. Promotes peptidyl transferase center (PTC) maturation. The sequence is that of Dual-action ribosomal maturation protein DarP from Yersinia pseudotuberculosis serotype O:1b (strain IP 31758).